Reading from the N-terminus, the 448-residue chain is Exodeoxyribonuclease 7 large subunit (448 aa).

This sequence belongs to the XseA family. As to quaternary structure, heterooligomer composed of large and small subunits.

Its subcellular location is the cytoplasm. It catalyses the reaction Exonucleolytic cleavage in either 5'- to 3'- or 3'- to 5'-direction to yield nucleoside 5'-phosphates.. Its function is as follows. Bidirectionally degrades single-stranded DNA into large acid-insoluble oligonucleotides, which are then degraded further into small acid-soluble oligonucleotides. This chain is Exodeoxyribonuclease 7 large subunit, found in Hamiltonella defensa subsp. Acyrthosiphon pisum (strain 5AT).